Here is a 511-residue protein sequence, read N- to C-terminus: Trigger factor (511 aa).

The region spanning 168–253 (GDLLTIDFVG…VKEVKAPAEV (86 aa)) is the PPIase FKBP-type domain. Residues 446 to 511 (DEHEHHHHDH…KAPAKKKKED (66 aa)) are disordered. The segment covering 455-478 (HDHDHDHDHDHDHGHDHDHGDEKP) has biased composition (basic and acidic residues). The segment covering 479 to 488 (KKKPAAKKAA) has biased composition (basic residues). The segment covering 489–498 (AKSDDGEAKP) has biased composition (basic and acidic residues). Over residues 499 to 511 (AAKKAPAKKKKED) the composition is skewed to basic residues.

The protein belongs to the FKBP-type PPIase family. Tig subfamily.

It is found in the cytoplasm. It catalyses the reaction [protein]-peptidylproline (omega=180) = [protein]-peptidylproline (omega=0). Functionally, involved in protein export. Acts as a chaperone by maintaining the newly synthesized protein in an open conformation. Functions as a peptidyl-prolyl cis-trans isomerase. The protein is Trigger factor of Parvibaculum lavamentivorans (strain DS-1 / DSM 13023 / NCIMB 13966).